Here is a 273-residue protein sequence, read N- to C-terminus: MYRLAAFDMDGTLLMRDHKIGSITLNALHQLADAGVTLTFATGRHYLDMKGILSHSGLNGYLITGNSTRVCDAEGNPLYGMDLPAELVEFVLRTPWQTNASIHLFRDDGWFTDRNDPDLLIAHTTSGFHFQLTEWDELPLTGNHKFCFIASHQELVELKAQLEQQMSGEADFCFSATDCLEVLPRGCNKGVALEKLSHHLDLTLADCMAFGDAMNDKEMLSRVGRGLVMGNALPQLKQELPQLQIIGRCEQQGVAHYLHHWLSSPHLTYSPEF.

Asp-8 serves as the catalytic Nucleophile. Mg(2+)-binding residues include Asp-8, Asp-10, and Asp-212.

It belongs to the HAD-like hydrolase superfamily. Cof family. Requires Mg(2+) as cofactor.

It carries out the reaction 4-amino-2-methyl-5-(diphosphooxymethyl)pyrimidine + H2O = 4-amino-2-methyl-5-(phosphooxymethyl)pyrimidine + phosphate + H(+). Catalyzes the hydrolysis of 4-amino-2-methyl-5-hydroxymethylpyrimidine pyrophosphate (HMP-PP) to 4-amino-2-methyl-5-hydroxymethylpyrimidine phosphate (HMP-P). In Yersinia pseudotuberculosis serotype IB (strain PB1/+), this protein is HMP-PP phosphatase.